The sequence spans 399 residues: MTKKRHLFTSESVTEGHPDKICDQISDSILDAILSKDANARVACETTVTTGLVLVAGEITTSTYVDIPKIVRETIQGIGYTRAKYGFDAETCAVLTSIDEQSADIAMGVDQALEAREGQMTDAEIEAIGAGDQGLMFGFACNETQELMPLPISLAHKLARRLTEVRKNDTLSYLRPDGKTQVTVEYDENGKPVRVDTIVISTQHHPDVTWEEIDRDLKEHVIKAVVPAELIDGETKFFINPTGRFVIGGPQGDAGLTGRKIIVDTYGGYARHGGGAFSGKDATKVDRSAAYAARYVAKNIVAAGLAEKAEVQLAYAIGVAQPVSISVDTFGTGKVSEDVLVELVRNNFDLRPAGIIKMLDLRRPIYKQTAAYGHFGRTDVDLTWERTDKAAALKEQAGL.

His-17 serves as a coordination point for ATP. Position 19 (Asp-19) interacts with Mg(2+). K(+) is bound at residue Glu-45. L-methionine-binding residues include Glu-58 and Gln-101. The tract at residues 101–111 (QSADIAMGVDQ) is flexible loop. Residues 177 to 179 (DGK), 244 to 245 (RF), Asp-253, 259 to 260 (RK), Ala-276, and Lys-280 each bind ATP. Residue Asp-253 coordinates L-methionine. L-methionine is bound at residue Lys-284.

It belongs to the AdoMet synthase family. As to quaternary structure, homotetramer; dimer of dimers. Requires Mg(2+) as cofactor. It depends on K(+) as a cofactor.

It localises to the cytoplasm. It carries out the reaction L-methionine + ATP + H2O = S-adenosyl-L-methionine + phosphate + diphosphate. Its pathway is amino-acid biosynthesis; S-adenosyl-L-methionine biosynthesis; S-adenosyl-L-methionine from L-methionine: step 1/1. Catalyzes the formation of S-adenosylmethionine (AdoMet) from methionine and ATP. The overall synthetic reaction is composed of two sequential steps, AdoMet formation and the subsequent tripolyphosphate hydrolysis which occurs prior to release of AdoMet from the enzyme. The polypeptide is S-adenosylmethionine synthase (Bacillus thuringiensis subsp. konkukian (strain 97-27)).